The sequence spans 200 residues: MAGLKQHSGLVVPLDAANVDTDAIIPKQFLQAITRVGFGKHLFHEWRYLDAEETRPNPEFVLNFPQYQGATILLARKNLGCGSSREHAPWALADYGFKVMIAPSFADIFYNNSLNNHMLPIKLSEQEVDEIFHWVWANPGKQIHVDLEAKTVTVGDKVYHFELDEFRRHCLLEGLDNIGLTLQHEDAIAAYEKKIPAFLR.

It belongs to the LeuD family. LeuD type 1 subfamily. As to quaternary structure, heterodimer of LeuC and LeuD.

It carries out the reaction (2R,3S)-3-isopropylmalate = (2S)-2-isopropylmalate. Its pathway is amino-acid biosynthesis; L-leucine biosynthesis; L-leucine from 3-methyl-2-oxobutanoate: step 2/4. In terms of biological role, catalyzes the isomerization between 2-isopropylmalate and 3-isopropylmalate, via the formation of 2-isopropylmaleate. In Actinobacillus succinogenes (strain ATCC 55618 / DSM 22257 / CCUG 43843 / 130Z), this protein is 3-isopropylmalate dehydratase small subunit.